We begin with the raw amino-acid sequence, 88 residues long: Kunitz-type U15-theraphotoxin-Hs1e (88 aa).

Residues 1–27 (MGTARFLSAVLLLSVLLMVTFPALLSA) form the signal peptide. Positions 28–33 (EYHDGR) are excised as a propeptide. The 49-residue stretch at 37–85 (CSLPSDSGDRLRFFEMWYFDGTTCTKFVYGGYGGNDNRFPTEKACMKRC) folds into the BPTI/Kunitz inhibitor domain. Intrachain disulfides connect cysteine 37–cysteine 85 and cysteine 60–cysteine 81.

This sequence belongs to the venom Kunitz-type family. 03 (sub-Kunitz) subfamily. As to expression, expressed by the venom gland.

It localises to the secreted. Serine protease inhibitor that inhibits trypsin (Ki=9.61 nM), kallikrein (Ki=24.8 nM), and chymotrypsin. The chain is Kunitz-type U15-theraphotoxin-Hs1e from Cyriopagopus schmidti (Chinese bird spider).